Here is a 226-residue protein sequence, read N- to C-terminus: Small ribosomal subunit protein uS3 (226 aa).

One can recognise a KH type-2 domain in the interval 39–107; the sequence is IRAYIKKNVV…EVTLNIKEVK (69 aa).

This sequence belongs to the universal ribosomal protein uS3 family. As to quaternary structure, part of the 30S ribosomal subunit. Forms a tight complex with proteins S10 and S14.

Its function is as follows. Binds the lower part of the 30S subunit head. Binds mRNA in the 70S ribosome, positioning it for translation. The sequence is that of Small ribosomal subunit protein uS3 from Pelagibacter ubique (strain HTCC1062).